We begin with the raw amino-acid sequence, 548 residues long: tRNA (guanine(26)-N(2))-dimethyltransferase (548 aa).

Residues 30–470 (ASLTEGSAII…APWSFVWDVL (441 aa)) enclose the Trm1 methyltransferase domain. S-adenosyl-L-methionine is bound by residues Arg-57, Arg-137, Asp-155, and Ala-186. Residues Cys-317, Cys-320, Cys-354, and Cys-357 each contribute to the Zn(2+) site. Positions 523 to 548 (QMNPTENWGPKSKPGKRTIAEVDSKS) are disordered.

Belongs to the class I-like SAM-binding methyltransferase superfamily. Trm1 family.

The protein resides in the mitochondrion. It is found in the nucleus. Its subcellular location is the cytoplasm. The catalysed reaction is guanosine(26) in tRNA + 2 S-adenosyl-L-methionine = N(2)-dimethylguanosine(26) in tRNA + 2 S-adenosyl-L-homocysteine + 2 H(+). In terms of biological role, dimethylates a single guanine residue at position 26 of nuclear- and mitochondrial-encoded tRNAs using S-adenosyl-L-methionine as donor of the methyl groups. Also has tRNA strand annealing and dissociation activity independently of its tRNA guanine-dimethyltransferase activity. The sequence is that of tRNA (guanine(26)-N(2))-dimethyltransferase from Schizosaccharomyces pombe (strain 972 / ATCC 24843) (Fission yeast).